A 324-amino-acid polypeptide reads, in one-letter code: Clavaminate synthase 1 (324 aa).

Residues His-144, Glu-146, and His-279 each coordinate Fe cation. Arg-293 lines the 2-oxoglutarate pocket.

This sequence belongs to the clavaminate synthase family. It depends on Fe(2+) as a cofactor.

The enzyme catalyses deoxyamidinoproclavaminate + 2-oxoglutarate + O2 = amidinoproclavaminate + succinate + CO2. The catalysed reaction is proclavaminate + 2-oxoglutarate + O2 = dihydroclavaminate + succinate + CO2 + H2O. It catalyses the reaction dihydroclavaminate + 2-oxoglutarate + O2 = clavaminate + succinate + CO2 + H2O. It functions in the pathway antibiotic biosynthesis; clavulanate biosynthesis; clavulanate from D-glyceraldehyde 3-phosphate and L-arginine: step 3/8. The protein operates within antibiotic biosynthesis; clavulanate biosynthesis; clavulanate from D-glyceraldehyde 3-phosphate and L-arginine: step 5/8. Its pathway is antibiotic biosynthesis; clavulanate biosynthesis; clavulanate from D-glyceraldehyde 3-phosphate and L-arginine: step 6/8. This is Clavaminate synthase 1 (cs1) from Streptomyces clavuligerus.